The following is a 402-amino-acid chain: CinA-like protein (402 aa).

Belongs to the CinA family.

This chain is CinA-like protein, found in Deinococcus deserti (strain DSM 17065 / CIP 109153 / LMG 22923 / VCD115).